The sequence spans 303 residues: MKITVLGCGALGQLWLSALCKHGHDVQGWLRVPQPYCSVNLIDTDGSFFNESLTANDPDFLAKSELLLVTLKAWQVSDAVRTLASTLPVTSPILLIHNGMGTIEELQSIQQPMLMGAITHAARRDGNIIIHVANGTTHIGPAREQDGDYSYLAEILQGVLPDVAWHNNIRAEMWRKLAVNCVINPLTALWNCPNGELRHHTDEINAICEEVAAVIEREGYHTSADDLCYYVEQVIDSTAENISSMLQDVRAMRHTEIDYITGYLLKRARVHGLAVPENSRLFEMVKRKESEYERSGTGMPRPW.

Residues 7 to 12, N98, and A122 each bind NADP(+); that span reads GCGALG. Position 98 (N98) interacts with substrate. The active-site Proton donor is the K176. Residues N180, N184, N194, and S244 each coordinate substrate. E256 contributes to the NADP(+) binding site.

It belongs to the ketopantoate reductase family. As to quaternary structure, monomer.

It is found in the cytoplasm. The catalysed reaction is (R)-pantoate + NADP(+) = 2-dehydropantoate + NADPH + H(+). The protein operates within cofactor biosynthesis; (R)-pantothenate biosynthesis; (R)-pantoate from 3-methyl-2-oxobutanoate: step 2/2. Functionally, catalyzes the NADPH-dependent reduction of ketopantoate into pantoic acid. The chain is 2-dehydropantoate 2-reductase (panE) from Salmonella typhi.